The sequence spans 594 residues: MIHSHNNNLSFCSQLITVRKMAALTRALPAPLHTSTTEYEEVPAPLPATPGPQLPKYGQRKGWKPKTAADFNGGGAYPECHVAQYPLDMGKKNKGQGSTLALQVDQDGLVRYDAIAQHGRAPGSRVQSSFKDLVPLANRTDVTESERQMERPDDLSVAETAERTRLALERITHGKIKAAQPKHVPKTNSDATYIRYTPANQSADEGKQRIIKMTEVQEDPLEPPRFKHKKIPRGPAEPPPPVLQSPPRAATAQDQKDWMIPPCISNWKNNKGYTIPLDKRLAADGRGLQDVHINDNFAKFSESLYIADRHIREEVRARAQLQQLLAQKQKTSKEEELRLLAQRAREDRSGLSSSVSGSVAAASASRLPAETGINLGGYGSESGSEEESDEEEEDEEAIRERNIVREEKRREREKEMRMSNMGSEMRAKMLAKEANRDISEKIALGLAKPSASKETLLDSRLFNREALSTGFASEDSYNLYDKPLFAGSSAAAAIYRPAGSSRNDESFGGGTEEGIKEEMSKDRFQLGNATRGFEGAEGVEAREGPVQFEKDTIVALDGSADPFGVEQFMDAARRGGKRTAEDRDEERRKRARDE.

Disordered regions lie at residues 36 to 63 (TTEY…RKGW), 223 to 254 (PPRF…TAQD), 370 to 426 (ETGI…SEMR), 498 to 523 (AGSS…SKDR), and 566 to 594 (EQFM…ARDE). Pro residues-rich tracts occupy residues 44–53 (APLPATPGPQ) and 235–244 (PAEPPPPVLQ). Acidic residues predominate over residues 383-397 (GSEEESDEEEEDEEA). Composition is skewed to basic and acidic residues over residues 398 to 417 (IRER…KEMR), 513 to 523 (EGIKEEMSKDR), and 578 to 594 (RTAE…ARDE).

Belongs to the SNW family. As to quaternary structure, associated with the spliceosome.

Its subcellular location is the nucleus. Functionally, involved in pre-mRNA splicing. In Cryptococcus neoformans var. neoformans serotype D (strain B-3501A) (Filobasidiella neoformans), this protein is Pre-mRNA-processing protein 45 (PRP45).